Reading from the N-terminus, the 136-residue chain is Large ribosomal subunit protein uL16 (136 aa).

This sequence belongs to the universal ribosomal protein uL16 family. In terms of assembly, part of the 50S ribosomal subunit.

In terms of biological role, binds 23S rRNA and is also seen to make contacts with the A and possibly P site tRNAs. The chain is Large ribosomal subunit protein uL16 from Bradyrhizobium diazoefficiens (strain JCM 10833 / BCRC 13528 / IAM 13628 / NBRC 14792 / USDA 110).